A 212-amino-acid polypeptide reads, in one-letter code: MNSPHSPILCVITDEDTSPLDMVPRALRGGANMIQLRRKTASGRELCRLAEALIPFCRQAGALFIINDRADIALATDADGVHLGQDDLPVAAARQLFGPGKIIGASTSSVDEALKAERNGADYAGFGHIFPTGSKAKGYKPLGPEAISLAAAALRIPLIAIGGITRENAGPLISRGAAGIAVISAVTKAESPEEAARSLMAIMNTTRAGEGT.

Residues 35 to 39 (QLRRK) and Asn67 each bind 4-amino-2-methyl-5-(diphosphooxymethyl)pyrimidine. Asp68 and Asp87 together coordinate Mg(2+). Ser106 contributes to the 4-amino-2-methyl-5-(diphosphooxymethyl)pyrimidine binding site. A 2-[(2R,5Z)-2-carboxy-4-methylthiazol-5(2H)-ylidene]ethyl phosphate-binding site is contributed by 132 to 134 (TGS). Lys135 contacts 4-amino-2-methyl-5-(diphosphooxymethyl)pyrimidine. 2-[(2R,5Z)-2-carboxy-4-methylthiazol-5(2H)-ylidene]ethyl phosphate contacts are provided by residues Gly163 and 183–184 (IS).

It belongs to the thiamine-phosphate synthase family. Mg(2+) is required as a cofactor.

It catalyses the reaction 2-[(2R,5Z)-2-carboxy-4-methylthiazol-5(2H)-ylidene]ethyl phosphate + 4-amino-2-methyl-5-(diphosphooxymethyl)pyrimidine + 2 H(+) = thiamine phosphate + CO2 + diphosphate. The catalysed reaction is 2-(2-carboxy-4-methylthiazol-5-yl)ethyl phosphate + 4-amino-2-methyl-5-(diphosphooxymethyl)pyrimidine + 2 H(+) = thiamine phosphate + CO2 + diphosphate. The enzyme catalyses 4-methyl-5-(2-phosphooxyethyl)-thiazole + 4-amino-2-methyl-5-(diphosphooxymethyl)pyrimidine + H(+) = thiamine phosphate + diphosphate. Its pathway is cofactor biosynthesis; thiamine diphosphate biosynthesis; thiamine phosphate from 4-amino-2-methyl-5-diphosphomethylpyrimidine and 4-methyl-5-(2-phosphoethyl)-thiazole: step 1/1. Condenses 4-methyl-5-(beta-hydroxyethyl)thiazole monophosphate (THZ-P) and 2-methyl-4-amino-5-hydroxymethyl pyrimidine pyrophosphate (HMP-PP) to form thiamine monophosphate (TMP). This Chlorobium luteolum (strain DSM 273 / BCRC 81028 / 2530) (Pelodictyon luteolum) protein is Thiamine-phosphate synthase.